A 461-amino-acid chain; its full sequence is 26S proteasome regulatory subunit 8 (461 aa).

Residue 185–192 (GPPGTGKT) participates in ATP binding.

The protein belongs to the AAA ATPase family.

It localises to the cytoplasm. Its subcellular location is the nucleus. In terms of biological role, the 26S proteasome is involved in the ATP-dependent degradation of ubiquitinated proteins. The regulatory (or ATPase) complex confers ATP dependency and substrate specificity to the 26S complex. This Xenopus laevis (African clawed frog) protein is 26S proteasome regulatory subunit 8 (psmc5).